Here is a 333-residue protein sequence, read N- to C-terminus: DNA-directed RNA polymerase subunit alpha (333 aa).

Residues 1–233 (MVREKIRVST…DLFIPFLHAE (233 aa)) form an alpha N-terminal domain (alpha-NTD) region. The segment at 269–333 (IALKYIFIDQ…DILEMEKNFA (65 aa)) is alpha C-terminal domain (alpha-CTD).

It belongs to the RNA polymerase alpha chain family. As to quaternary structure, in plastids the minimal PEP RNA polymerase catalytic core is composed of four subunits: alpha, beta, beta', and beta''. When a (nuclear-encoded) sigma factor is associated with the core the holoenzyme is formed, which can initiate transcription.

It localises to the plastid. Its subcellular location is the chloroplast. The catalysed reaction is RNA(n) + a ribonucleoside 5'-triphosphate = RNA(n+1) + diphosphate. In terms of biological role, DNA-dependent RNA polymerase catalyzes the transcription of DNA into RNA using the four ribonucleoside triphosphates as substrates. The chain is DNA-directed RNA polymerase subunit alpha from Cucumis sativus (Cucumber).